Here is a 350-residue protein sequence, read N- to C-terminus: Anthranilate phosphoribosyltransferase (350 aa).

Residues glycine 94, 97 to 98 (GD), threonine 102, 104 to 107 (NIST), 122 to 130 (KHGNRAVSS), and serine 134 each bind 5-phospho-alpha-D-ribose 1-diphosphate. Glycine 94 provides a ligand contact to anthranilate. Serine 106 serves as a coordination point for Mg(2+). Asparagine 125 is a binding site for anthranilate. Arginine 180 is a binding site for anthranilate. Residues aspartate 239 and glutamate 240 each coordinate Mg(2+).

Belongs to the anthranilate phosphoribosyltransferase family. In terms of assembly, homodimer. Mg(2+) is required as a cofactor.

It carries out the reaction N-(5-phospho-beta-D-ribosyl)anthranilate + diphosphate = 5-phospho-alpha-D-ribose 1-diphosphate + anthranilate. Its pathway is amino-acid biosynthesis; L-tryptophan biosynthesis; L-tryptophan from chorismate: step 2/5. Functionally, catalyzes the transfer of the phosphoribosyl group of 5-phosphorylribose-1-pyrophosphate (PRPP) to anthranilate to yield N-(5'-phosphoribosyl)-anthranilate (PRA). The protein is Anthranilate phosphoribosyltransferase of Geobacter sulfurreducens (strain ATCC 51573 / DSM 12127 / PCA).